Here is a 104-residue protein sequence, read N- to C-terminus: L-rhamnose mutarotase (104 aa).

Tyr18 serves as a coordination point for substrate. Catalysis depends on His22, which acts as the Proton donor. Substrate contacts are provided by residues Tyr41 and 76–77 (WW).

The protein belongs to the rhamnose mutarotase family. As to quaternary structure, homodimer.

The protein resides in the cytoplasm. The catalysed reaction is alpha-L-rhamnose = beta-L-rhamnose. It participates in carbohydrate metabolism; L-rhamnose metabolism. In terms of biological role, involved in the anomeric conversion of L-rhamnose. The sequence is that of L-rhamnose mutarotase from Pectobacterium carotovorum subsp. carotovorum (strain PC1).